Here is a 282-residue protein sequence, read N- to C-terminus: Energy-coupling factor transporter ATP-binding protein EcfA1 (282 aa).

Positions Ile-9–Asp-243 constitute an ABC transporter domain. Position 43–50 (Gly-43–Ser-50) interacts with ATP.

The protein belongs to the ABC transporter superfamily. Energy-coupling factor EcfA family. In terms of assembly, forms a stable energy-coupling factor (ECF) transporter complex composed of 2 membrane-embedded substrate-binding proteins (S component), 2 ATP-binding proteins (A component) and 2 transmembrane proteins (T component).

It is found in the cell membrane. Its function is as follows. ATP-binding (A) component of a common energy-coupling factor (ECF) ABC-transporter complex. Unlike classic ABC transporters this ECF transporter provides the energy necessary to transport a number of different substrates. This Ligilactobacillus salivarius (strain UCC118) (Lactobacillus salivarius) protein is Energy-coupling factor transporter ATP-binding protein EcfA1.